The chain runs to 508 residues: Photosystem II CP47 reaction center protein (508 aa).

6 consecutive transmembrane segments (helical) span residues 21–36 (AVHI…WAGS), 101–115 (IILS…IWHW), 140–156 (GIHL…FGAF), 203–218 (IAAG…FHLS), 237–252 (VLSS…AFVV), and 457–472 (NFAL…HGGR).

The protein belongs to the PsbB/PsbC family. PsbB subfamily. As to quaternary structure, PSII is composed of 1 copy each of membrane proteins PsbA, PsbB, PsbC, PsbD, PsbE, PsbF, PsbH, PsbI, PsbJ, PsbK, PsbL, PsbM, PsbT, PsbX, PsbY, PsbZ, Psb30/Ycf12, at least 3 peripheral proteins of the oxygen-evolving complex and a large number of cofactors. It forms dimeric complexes. The cofactor is Binds multiple chlorophylls. PSII binds additional chlorophylls, carotenoids and specific lipids..

The protein resides in the plastid. Its subcellular location is the chloroplast thylakoid membrane. Its function is as follows. One of the components of the core complex of photosystem II (PSII). It binds chlorophyll and helps catalyze the primary light-induced photochemical processes of PSII. PSII is a light-driven water:plastoquinone oxidoreductase, using light energy to abstract electrons from H(2)O, generating O(2) and a proton gradient subsequently used for ATP formation. This chain is Photosystem II CP47 reaction center protein, found in Chaetosphaeridium globosum (Charophycean green alga).